Reading from the N-terminus, the 422-residue chain is Zona pellucida sperm-binding protein 3 (422 aa).

The signal sequence occupies residues 1–22 (MGLSYQLLLCLLLCGGAKQCCS). Residue Gln23 is modified to Pyrrolidone carboxylic acid. The Extracellular portion of the chain corresponds to 23-386 (QPLWLLPGGT…GWASSAQTSL (364 aa)). 2 O-linked (GalNAc...) threonine glycosylation sites follow: Thr32 and Thr34. A ZP domain is found at 45-306 (ECLEAELVVT…KACSFNRSSK (262 aa)). 2 cysteine pairs are disulfide-bonded: Cys46–Cys139 and Cys78–Cys98. Residue Asn146 is glycosylated (N-linked (GlcNAc...) asparagine). 3 O-linked (GalNAc...) threonine glycosylation sites follow: Thr155, Thr161, and Thr162. 2 cysteine pairs are disulfide-bonded: Cys216–Cys281 and Cys238–Cys299. N-linked (GlcNAc...) asparagine glycosylation is found at Asn271 and Asn302. Residues 350 to 422 (RRHVRDEADV…TPSHVVSLSQ (73 aa)) constitute a propeptide, removed in mature form. The helical transmembrane segment at 387 to 407 (ALGLGLAAVAFLTLAAIVLGV) threads the bilayer. The Cytoplasmic portion of the chain corresponds to 408-422 (TRSCHTPSHVVSLSQ).

Belongs to the ZP domain family. ZPC subfamily. In terms of assembly, polymers of ZP2 and ZP3 organized into long filaments cross-linked by ZP1 homodimers. Interacts with ZP1 and ZP2. Post-translationally, proteolytically cleaved before the transmembrane segment to yield the secreted ectodomain incorporated in the zona pellucida. N-glycosylated. In terms of processing, O-glycosylated; removal of O-linked glycans may play an important role in the post-fertilization block to polyspermy. Expressed in oocytes.

The protein localises to the zona pellucida. The protein resides in the cell membrane. In terms of biological role, component of the zona pellucida, an extracellular matrix surrounding oocytes which mediates sperm binding, induction of the acrosome reaction and prevents post-fertilization polyspermy. The zona pellucida is composed of 3 to 4 glycoproteins, ZP1, ZP2, ZP3, and ZP4. ZP3 is essential for sperm binding and zona matrix formation. The chain is Zona pellucida sperm-binding protein 3 (ZP3) from Mesocricetus auratus (Golden hamster).